A 57-amino-acid chain; its full sequence is Large ribosomal subunit protein bL32 (57 aa).

The protein belongs to the bacterial ribosomal protein bL32 family.

This is Large ribosomal subunit protein bL32 from Staphylococcus epidermidis (strain ATCC 35984 / DSM 28319 / BCRC 17069 / CCUG 31568 / BM 3577 / RP62A).